We begin with the raw amino-acid sequence, 56 residues long: Ovomucoid (56 aa).

The region spanning 6 to 56 (VDCSEYPKPACTLEYRPLCGSDNKTYANKCNFCNAVVESNGTLTLSHFGKC) is the Kazal-like domain. Disulfide bonds link Cys8–Cys38, Cys16–Cys35, and Cys24–Cys56. Residue Asn45 is glycosylated (N-linked (GlcNAc...) asparagine).

Its subcellular location is the secreted. In Callipepla californica (California quail), this protein is Ovomucoid.